Reading from the N-terminus, the 169-residue chain is Desumoylating isopeptidase 1 (169 aa).

Residues 8 to 150 form the PPPDE domain; sequence HLVRLYVYDM…LGQALRPLLD (143 aa). Histidine 39 is a catalytic residue. The Nuclear export signal 1 signature appears at 84–92; sequence IFLEYLSSL. Cysteine 109 is a catalytic residue. The short motif at 140-154 is the Nuclear export signal 2 element; that stretch reads PLGQALRPLLDSVQI.

This sequence belongs to the DeSI family. In terms of assembly, homodimer.

It localises to the cytoplasm. It is found in the nucleus. It carries out the reaction S-hexadecanoyl-L-cysteinyl-[protein] + H2O = L-cysteinyl-[protein] + hexadecanoate + H(+). Functionally, protease which deconjugates SUMO1, SUMO2 and SUMO3 from some substrate proteins. Has isopeptidase but not SUMO-processing activity. Collaborates with ubqln4 in the export of ubiquitinated proteins from the nucleus to the cytoplasm. Exhibits palmitoyl protein thioesterase (S-depalmitoylation) activity towards synthetic substrates 4-methylumbelliferyl-6-S-palmitoyl-beta-D-glucopyranoside and S-depalmitoylation probe 5 (DPP-5). This chain is Desumoylating isopeptidase 1, found in Xenopus laevis (African clawed frog).